The sequence spans 306 residues: Pantothenate kinase (306 aa).

Residue 91-98 (GSVAVGKS) coordinates ATP.

The protein belongs to the prokaryotic pantothenate kinase family.

Its subcellular location is the cytoplasm. It catalyses the reaction (R)-pantothenate + ATP = (R)-4'-phosphopantothenate + ADP + H(+). It functions in the pathway cofactor biosynthesis; coenzyme A biosynthesis; CoA from (R)-pantothenate: step 1/5. In Streptococcus pyogenes serotype M18 (strain MGAS8232), this protein is Pantothenate kinase (coaA).